Here is a 67-residue protein sequence, read N- to C-terminus: Large ribosomal subunit protein uL29 (67 aa).

It belongs to the universal ribosomal protein uL29 family.

The sequence is that of Large ribosomal subunit protein uL29 from Wolbachia pipientis wMel.